A 390-amino-acid chain; its full sequence is Formate-dependent phosphoribosylglycinamide formyltransferase (390 aa).

Residues 19-20 and Glu79 each bind N(1)-(5-phospho-beta-D-ribosyl)glycinamide; that span reads EL. ATP is bound by residues Arg111, Lys152, 157–162, 192–195, and Glu200; these read SSGKGQ and EGFV. In terms of domain architecture, ATP-grasp spans 116 to 305; that stretch reads RLAAEELGLP…EFAIHARAIL (190 aa). Residues Glu264 and Glu276 each coordinate Mg(2+). N(1)-(5-phospho-beta-D-ribosyl)glycinamide contacts are provided by residues Asp283, Lys353, and 360–361; that span reads RR.

It belongs to the PurK/PurT family. In terms of assembly, homodimer.

The enzyme catalyses N(1)-(5-phospho-beta-D-ribosyl)glycinamide + formate + ATP = N(2)-formyl-N(1)-(5-phospho-beta-D-ribosyl)glycinamide + ADP + phosphate + H(+). It participates in purine metabolism; IMP biosynthesis via de novo pathway; N(2)-formyl-N(1)-(5-phospho-D-ribosyl)glycinamide from N(1)-(5-phospho-D-ribosyl)glycinamide (formate route): step 1/1. In terms of biological role, involved in the de novo purine biosynthesis. Catalyzes the transfer of formate to 5-phospho-ribosyl-glycinamide (GAR), producing 5-phospho-ribosyl-N-formylglycinamide (FGAR). Formate is provided by PurU via hydrolysis of 10-formyl-tetrahydrofolate. The protein is Formate-dependent phosphoribosylglycinamide formyltransferase of Marinobacter nauticus (strain ATCC 700491 / DSM 11845 / VT8) (Marinobacter aquaeolei).